The sequence spans 320 residues: Heterogeneous nuclear ribonucleoprotein A1 (320 aa).

M1 is modified (N-acetylmethionine). An N-acetylserine; in Heterogeneous nuclear ribonucleoprotein A1, N-terminally processed modification is found at S2. S2 carries the post-translational modification Phosphoserine. At K3 the chain carries N6-acetyllysine; alternate. K3 participates in a covalent cross-link: Glycyl lysine isopeptide (Lys-Gly) (interchain with G-Cter in SUMO2); alternate. A phosphoserine mark is found at S4 and S6. The segment at 4–94 (SESPKEPEQL…EPKRAVSRED (91 aa)) is globular A domain. A Glycyl lysine isopeptide (Lys-Gly) (interchain with G-Cter in SUMO2) cross-link involves residue K8. RRM domains lie at 14–97 (RKLF…DSQR) and 105–184 (KKIF…LSKQ). Phosphoserine is present on S22. K78 participates in a covalent cross-link: Glycyl lysine isopeptide (Lys-Gly) (interchain with G-Cter in SUMO2). A globular B domain region spans residues 95–185 (SQRPGAHLTV…EVRKALSKQE (91 aa)). K113 is covalently cross-linked (Glycyl lysine isopeptide (Lys-Gly) (interchain with G-Cter in SUMO)). Glycyl lysine isopeptide (Lys-Gly) (interchain with G-Cter in SUMO2) cross-links involve residues K179 and K183. The interval 182-216 (SKQEMASASSSQRGRSGSGNFGGGRGGGFGGNDNF) is disordered. Phosphoserine; by MKNK2 is present on S192. Position 194 is an asymmetric dimethylarginine; alternate (R194). R194 bears the Dimethylated arginine; alternate mark. The residue at position 194 (R194) is an Omega-N-methylarginine; alternate. Positions 197 to 216 (SGSGNFGGGRGGGFGGNDNF) are enriched in gly residues. At S199 the chain carries Phosphoserine. Asymmetric dimethylarginine; alternate is present on residues R206, R218, R225, and R232. Residue R206 is modified to Dimethylated arginine; alternate. Omega-N-methylarginine; alternate occurs at positions 206, 218, 225, and 232. An RNA-binding RGG-box region spans residues 218–240 (RGGNFSGRGGFGGSRGGGGYGGS). R225 bears the Dimethylated arginine; alternate mark. The interval 268–305 (NQSSNFGPMKGGNFGGRSLGPYGGGGQYFAKPRNQGGY) is nuclear targeting sequence. Over residues 277–294 (KGGNFGGRSLGPYGGGGQ) the composition is skewed to gly residues. Residues 277-320 (KGGNFGGRSLGPYGGGGQYFAKPRNQGGYGGSSSSSSYGSGRRF) are disordered. The residue at position 284 (R284) is an Omega-N-methylarginine. S285 is modified (phosphoserine). K298 is modified (N6-acetyllysine; alternate). Residue K298 forms a Glycyl lysine isopeptide (Lys-Gly) (interchain with G-Cter in SUMO2); alternate linkage. Omega-N-methylarginine is present on R300. Positions 308 to 320 (SSSSSSYGSGRRF) are enriched in low complexity. Position 309 is a phosphoserine (S309). S310, S311, and S312 each carry phosphoserine; by MKNK2. Phosphoserine is present on residues S313 and S316. R318 carries the post-translational modification Omega-N-methylarginine.

In terms of assembly, identified in the spliceosome C complex. Identified in a IGF2BP1-dependent mRNP granule complex containing untranslated mRNAs. Interacts with SEPT6, C9orf72, KHDRBS1, UBQLN2. Interacts with PPIA/CYPA. In terms of processing, sumoylated.

The protein resides in the nucleus. Its subcellular location is the cytoplasm. In terms of biological role, involved in the packaging of pre-mRNA into hnRNP particles, transport of poly(A) mRNA from the nucleus to the cytoplasm and modulation of splice site selection. Plays a role in the splicing of pyruvate kinase PKM by binding repressively to sequences flanking PKM exon 9, inhibiting exon 9 inclusion and resulting in exon 10 inclusion and production of the PKM M2 isoform. Binds to the IRES and thereby inhibits the translation of the apoptosis protease activating factor APAF1. May bind to specific miRNA hairpins. The polypeptide is Heterogeneous nuclear ribonucleoprotein A1 (HNRNPA1) (Macaca mulatta (Rhesus macaque)).